Reading from the N-terminus, the 1592-residue chain is MAEPPPDDSAPVRLKTLENIYMDGPSKKPEALSFETLIDSLICLYDECCNSTLRKEKCIAEFVESVKTVISKAKKLRLSRDDFEVLKVIGKGAFGEVAVVRMRGVGEIYAMKILNKWEMVKRAETACFREERDVLVYGDRRWITNLHYAFQDEKNLYFVMDYYIGGDMLTLLSKFVDHIPESMAKFYIAEMVLAIDSLHRLGYVHRDVKPDNVLLDMQGHIRLADFGSCLRILADGSVASNVAVGTPDYISPEILRAMEDGRGRYGKECDWWSLGICMYEMLYGTTPFYSERLVDTYGKIMSHQDMLDFPDDEIDWVVSEEAKDLIRQLICSSDVRFGRNGLSDFQLHPFFEGIDWNTIRDSNPPYVPEVSSPEDTSNFDVDVCEDDFTPCLQETQPPRVLAAFTGNHLPFVGFSYTHGSLLSDARSLTDEIRAIAQRCQGDAELMEKSVDGFMVELENEKAELVQKLKEAQTIIAQHVAENPRSEEDRNYESTIAQLKDEIQILNKRLEDEALAQQQQKPKDEIVAESEKKLKELKERNKQLVMEKSEIQRELDNINDHLDQVLVEKATVVQQRDDMQAELADVGDSLLTEKDSVKRLQDEAEKAKKQVADFEEKLKEIETEKIALIKKQEEVTIEARKSVETDDHLSEEVVAAKNTIASLQATNEERETEIKKLKQRMDEERASHTAQSEQEMKQLEAHYERAQKMLQDNVEQMNVENRGLRDEIEKLSQQMAALPRGGLNEQQLHEIFNWVSEEKATREEMENLTRKITGEVESLKNNSPLTTSNYIQNTPSGWGSRRMNNVARKDGLDLQRQLQAEIDAKLKLKAELKNSQEQYLTSAARLDDTEKRMASLMREVAMLKQQKNIENSSDSAFSSTMGRGDLMISMNNDYEMSNSSLMRQEMISRQSTPSYENAILLHDHQVPKRVDDLRYKQKPMKTASGIFSPVSISAMERGHNFERMKIKTPTKCGHCTSILIGLDRQGLFCQSCQYACHVSCAERVSQSCPVPEEERRPLGIDPTRGVGTAYEGLVKTPRAGGVRKGWQTAYVVVCDFKLYLYDCTVDRQNKMQDVKNEIRLVLDMRDPDFTVCGVSEADVIHAQKGDIPKIFRVTTTQILNSSSEYSSSSKFYTLFMAETEEEKRKWVVALSELKTLLRRSKLADRKAFLVKEVFDVTTLPSIRVAQCCAIIDRSKIVIGFSDHGLYCIEISRQLLIPVGGEKENKQRCVETVEYDEAEQLLMMIVGPAKDRHVRIVPSAALDGRDLKWIKVNDTKGCHLLAVGTNNPGGRAGFFAVAFKKSVTIFQIDRSEKRHKKWKDLAMPGTPQSIAIFNGRLYVGFSHSFRSWSLVGVDSSPVGSGDASGAVLQHISLVNMEDTSLQFLNQQTSYEAKLIVNVPGSPDEYLLVFNMIGLYVNEMGRRSRLPEVMFPTQAKYFAYHEPYLCVFSENEVDIFNVTLAEWVQTINLRSAKPLSGDGILSTCLCNDSPIFVLLQNVLQDQDSIEVPVNLASGSTDGRKVTRRKFTFRTIGKDDRSASERRSHIQISTPSDFMHIVHMGPAPVMELQQNFIDLQSNHSHTSSDKDSLNRSVNND.

An involved in homo-dimerization region spans residues 1–954 (MAEPPPDDSA…IFSPVSISAM (954 aa)). Residues 83 to 351 (FEVLKVIGKG…LSDFQLHPFF (269 aa)) form the Protein kinase domain. ATP-binding positions include 89 to 97 (IGKGAFGEV) and Lys112. The active-site Proton acceptor is the Asp207. An AGC-kinase C-terminal domain is found at 352-426 (EGIDWNTIRD…THGSLLSDAR (75 aa)). Position 415 is a phosphoserine (Ser415). Tyr416 carries the phosphotyrosine modification. 2 coiled-coil regions span residues 444 to 782 (ELME…KNNS) and 811 to 871 (LDLQ…IENS). The segment covering 782–796 (SPLTTSNYIQNTPSG) has biased composition (polar residues). Positions 782 to 801 (SPLTTSNYIQNTPSGWGSRR) are disordered. The involved in binding to membranes, with a preference for di-phosphorylated phosphoinositides (PIPs) stretch occupies residues 955-1534 (ERGHNFERMK…FRTIGKDDRS (580 aa)). Residues 957–1007 (GHNFERMKIKTPTKCGHCTSILIGLDRQGLFCQSCQYACHVSCAERVSQSC) form a Phorbol-ester/DAG-type zinc finger. His958, Cys971, Cys974, Cys988, Cys991, His996, Cys999, and Cys1007 together coordinate Zn(2+). Residues 1026–1154 (GTAYEGLVKT…WVVALSELKT (129 aa)) enclose the PH domain. The CNH domain occupies 1181–1479 (IRVAQCCAII…KPLSGDGILS (299 aa)). One can recognise a CRIB domain in the interval 1544–1557 (ISTPSDFMHIVHMG). Positions 1544–1557 (ISTPSDFMHIVHMG) are involved in interaction with cdc-42 (GTP-bound). Deletion prevents rescue of a null mutant; furthermore deleted form of mrck-1 is no longer recruited to the cell cortex and instead appears to be completely cytoplasmic.

It belongs to the protein kinase superfamily. AGC Ser/Thr protein kinase family. DMPK subfamily. In terms of assembly, homodimer, via N-terminal domains. Interacts (via the CRIB domain) with cdc-42 (GTP-bound), but with a lower affinity for cdc-42 bound to GDP; the interaction is direct and may play a role in the recruitment of mrck-1 to the apical membrane. It depends on Mg(2+) as a cofactor. Expressed in embryonic and L4 larval seam cells and in embryonic dorsal and ventral epidermal cells. Also expressed in the pharynx throughout development and in sublateral nerve cords in the L4 larva.

It is found in the cytoplasm. It localises to the cell cortex. The catalysed reaction is L-seryl-[protein] + ATP = O-phospho-L-seryl-[protein] + ADP + H(+). It catalyses the reaction L-threonyl-[protein] + ATP = O-phospho-L-threonyl-[protein] + ADP + H(+). Functionally, serine/threonine-protein kinase. Involved in regulating endoderm precursor cell movements during early gastrulation; activates apical myosin and thereby increases actomyosin contractility and tension in the apical cell cortex, probably as a result of recruitment of mrck-1 to the cortex by a combination of interaction with active cdc-42 and membrane binding. May phosphorylate and inactivate the phosphatase mel-11, and thereby contribute to the regulation of myosin II contractility during embryonic elongation. Involved in controlling canal length and Golgi/ER integrity during excretory canal elongation. The chain is Serine/threonine-protein kinase mrck-1 from Caenorhabditis elegans.